We begin with the raw amino-acid sequence, 164 residues long: UPF0304 protein YfbU (164 aa).

Belongs to the UPF0304 family.

This Escherichia coli O139:H28 (strain E24377A / ETEC) protein is UPF0304 protein YfbU.